Reading from the N-terminus, the 142-residue chain is Small ribosomal subunit protein eS6 (142 aa).

The interval 117–142 (EKPLDELAPKKEKKEGAAGGRAPAKK) is disordered. A compositionally biased stretch (basic and acidic residues) spans 118–132 (KPLDELAPKKEKKEG).

This sequence belongs to the eukaryotic ribosomal protein eS6 family.

In Methanocella arvoryzae (strain DSM 22066 / NBRC 105507 / MRE50), this protein is Small ribosomal subunit protein eS6.